Here is a 109-residue protein sequence, read N- to C-terminus: Class I hydrophobin SC1 (109 aa).

Positions 1–22 are cleaved as a signal peptide; that stretch reads MRFSLAILALPVLAAATAVPRG. Intrachain disulfides connect C27–C88, C34–C82, C35–C69, and C89–C102.

Belongs to the fungal hydrophobin family. In terms of assembly, self-assembles to form functional amyloid fibrils called rodlets. Self-assembly into fibrillar rodlets occurs spontaneously at hydrophobic:hydrophilic interfaces and the rodlets further associate laterally to form amphipathic monolayers.

It is found in the secreted. The protein localises to the cell wall. Its function is as follows. Aerial growth, conidiation, and dispersal of filamentous fungi in the environment rely upon a capability of their secreting small amphipathic proteins called hydrophobins (HPBs) with low sequence identity. Class I can self-assemble into an outermost layer of rodlet bundles on aerial cell surfaces, conferring cellular hydrophobicity that supports fungal growth, development and dispersal; whereas Class II form highly ordered films at water-air interfaces through intermolecular interactions but contribute nothing to the rodlet structure. SC1 is a dikaryon-specific class I hydrophobin that contributes to the formation of aerial hyphae and fruiting bodies. This Schizophyllum commune (Split gill fungus) protein is Class I hydrophobin SC1.